We begin with the raw amino-acid sequence, 229 residues long: Ribosome maturation factor RimM (229 aa).

The PRC barrel domain occupies 148-229; the sequence is ADEFYWVDLI…RVVVDWEADY (82 aa).

The protein belongs to the RimM family. As to quaternary structure, binds ribosomal protein uS19.

It localises to the cytoplasm. Its function is as follows. An accessory protein needed during the final step in the assembly of 30S ribosomal subunit, possibly for assembly of the head region. Essential for efficient processing of 16S rRNA. May be needed both before and after RbfA during the maturation of 16S rRNA. It has affinity for free ribosomal 30S subunits but not for 70S ribosomes. The sequence is that of Ribosome maturation factor RimM from Burkholderia pseudomallei (strain 1710b).